We begin with the raw amino-acid sequence, 729 residues long: Fatty acid oxidation complex subunit alpha (729 aa).

Residues 1–189 form an enoyl-CoA hydratase/isomerase region; it reads MLYKGDTLYL…KIGLVDGVVK (189 aa). Aspartate 296 contacts substrate. Residues 311-729 are 3-hydroxyacyl-CoA dehydrogenase; the sequence is ETPKQAAVLG…ARLVGDLKTA (419 aa). NAD(+) is bound by residues methionine 324, aspartate 343, 400–402, lysine 407, and serine 429; that span reads VVE. Histidine 450 acts as the For 3-hydroxyacyl-CoA dehydrogenase activity in catalysis. NAD(+) is bound at residue asparagine 453. 2 residues coordinate substrate: asparagine 500 and tyrosine 660.

The protein in the N-terminal section; belongs to the enoyl-CoA hydratase/isomerase family. In the C-terminal section; belongs to the 3-hydroxyacyl-CoA dehydrogenase family. In terms of assembly, heterotetramer of two alpha chains (FadB) and two beta chains (FadA).

The catalysed reaction is a (3S)-3-hydroxyacyl-CoA + NAD(+) = a 3-oxoacyl-CoA + NADH + H(+). The enzyme catalyses a (3S)-3-hydroxyacyl-CoA = a (2E)-enoyl-CoA + H2O. It carries out the reaction a 4-saturated-(3S)-3-hydroxyacyl-CoA = a (3E)-enoyl-CoA + H2O. It catalyses the reaction (3S)-3-hydroxybutanoyl-CoA = (3R)-3-hydroxybutanoyl-CoA. The catalysed reaction is a (3Z)-enoyl-CoA = a 4-saturated (2E)-enoyl-CoA. The enzyme catalyses a (3E)-enoyl-CoA = a 4-saturated (2E)-enoyl-CoA. It functions in the pathway lipid metabolism; fatty acid beta-oxidation. Functionally, involved in the aerobic and anaerobic degradation of long-chain fatty acids via beta-oxidation cycle. Catalyzes the formation of 3-oxoacyl-CoA from enoyl-CoA via L-3-hydroxyacyl-CoA. It can also use D-3-hydroxyacyl-CoA and cis-3-enoyl-CoA as substrate. The protein is Fatty acid oxidation complex subunit alpha of Escherichia coli (strain SE11).